The primary structure comprises 418 residues: MAGSVMVPSVSIGLALSVLIFFALSLKTLEARGTFGRLAGQPPQRTAAGGICASSVHIFGYKCEEHDVVTQDGYILNMQRIPEGRAGAVAGDGGKRQPVLIQHGILVDGMSWLLNPADQNLPLILADQGFDVWMGNTRGTRFSRRHKYLNPSQRAFWNWTWDELVSYDLPAMFDHIHGLTGQKIHYLGHSLGTLIGFASFSEKGLVDQVRSAAMLSPVAYLSHMTTVIGDIAAKTFLAEATSILGWPEFNPKSGLVGDFIKAICLKAGIDCYDLVSVITGKNCCLNASTIDLFLANEPQSTSTKNMIHLAQTVRDKELRKYNYGSSDRNIKHYGQAIPPAYNISAIPHELPLFFSYGGLDSLADVKDVEFLLDQFKYHDIDKMNVQFVKDYAHADFIMGVTAKDVVYNQVATFFKRQA.

Positions 1–31 (MAGSVMVPSVSIGLALSVLIFFALSLKTLEA) are cleaved as a signal peptide. A glycan (N-linked (GlcNAc...) asparagine) is linked at asparagine 158. Serine 190 acts as the Nucleophile in catalysis. N-linked (GlcNAc...) asparagine glycosylation is found at asparagine 286 and asparagine 342. Active-site charge relay system residues include aspartate 360 and histidine 393.

It belongs to the AB hydrolase superfamily. Lipase family.

The protein localises to the secreted. The catalysed reaction is a triacylglycerol + H2O = a diacylglycerol + a fatty acid + H(+). Functionally, triacylglycerol (TAG) lipase. May be involved for TAG storage breakdown during seed germination. This chain is Triacylglycerol lipase 2 (LIP2), found in Arabidopsis thaliana (Mouse-ear cress).